A 275-amino-acid chain; its full sequence is 4-diphosphocytidyl-2-C-methyl-D-erythritol kinase (275 aa).

Lysine 8 is an active-site residue. Position 86 to 96 (86 to 96) interacts with ATP; it reads PEGAGLGGGSS. Aspartate 125 is a catalytic residue.

This sequence belongs to the GHMP kinase family. IspE subfamily.

The enzyme catalyses 4-CDP-2-C-methyl-D-erythritol + ATP = 4-CDP-2-C-methyl-D-erythritol 2-phosphate + ADP + H(+). It functions in the pathway isoprenoid biosynthesis; isopentenyl diphosphate biosynthesis via DXP pathway; isopentenyl diphosphate from 1-deoxy-D-xylulose 5-phosphate: step 3/6. Its function is as follows. Catalyzes the phosphorylation of the position 2 hydroxy group of 4-diphosphocytidyl-2C-methyl-D-erythritol. This is 4-diphosphocytidyl-2-C-methyl-D-erythritol kinase from Thermus thermophilus (strain ATCC BAA-163 / DSM 7039 / HB27).